The chain runs to 102 residues: S-phase delaying protein 2 (102 aa).

The interval 43-62 (FPSYHKDQTDRNELPQQKHD) is disordered. The span at 46–62 (YHKDQTDRNELPQQKHD) shows a compositional bias: basic and acidic residues.

The protein belongs to the DIF1/spd1 family.

The protein resides in the cytoplasm. Its subcellular location is the nucleus. In terms of biological role, regulates the ribonucleotide reductase activity. This Schizosaccharomyces pombe (strain 972 / ATCC 24843) (Fission yeast) protein is S-phase delaying protein 2 (spd2).